Here is a 332-residue protein sequence, read N- to C-terminus: Casein kinase II subunit alpha (332 aa).

The region spanning 43 to 327 (YEIIRKVGRG…TCQEAMAHPY (285 aa)) is the Protein kinase domain. ATP-binding positions include 49-57 (VGRGKYSEV) and K72. D160 (proton acceptor) is an active-site residue.

Belongs to the protein kinase superfamily. Ser/Thr protein kinase family. CK2 subfamily. Tetramer composed of two alpha chains, one beta chain and one beta' chain.

It carries out the reaction L-seryl-[protein] + ATP = O-phospho-L-seryl-[protein] + ADP + H(+). It catalyses the reaction L-threonyl-[protein] + ATP = O-phospho-L-threonyl-[protein] + ADP + H(+). In terms of biological role, catalytic subunit of a constitutively active serine/threonine-protein kinase complex that phosphorylates a large number of substrates containing acidic residues C-terminal to the phosphorylated serine or threonine. The polypeptide is Casein kinase II subunit alpha (Schizosaccharomyces pombe (strain 972 / ATCC 24843) (Fission yeast)).